Here is a 146-residue protein sequence, read N- to C-terminus: Cyanate hydratase (146 aa).

Residues R87, E90, and S113 contribute to the active site.

It belongs to the cyanase family.

It catalyses the reaction cyanate + hydrogencarbonate + 3 H(+) = NH4(+) + 2 CO2. Functionally, catalyzes the reaction of cyanate with bicarbonate to produce ammonia and carbon dioxide. The sequence is that of Cyanate hydratase from Trichormus variabilis (strain ATCC 29413 / PCC 7937) (Anabaena variabilis).